The following is a 65-amino-acid chain: UPF0434 protein CPS_2127 (65 aa).

Belongs to the UPF0434 family.

This Colwellia psychrerythraea (strain 34H / ATCC BAA-681) (Vibrio psychroerythus) protein is UPF0434 protein CPS_2127.